A 425-amino-acid chain; its full sequence is Glutamate-1-semialdehyde 2,1-aminomutase (425 aa).

K264 bears the N6-(pyridoxal phosphate)lysine mark.

The protein belongs to the class-III pyridoxal-phosphate-dependent aminotransferase family. HemL subfamily. In terms of assembly, homodimer. Pyridoxal 5'-phosphate serves as cofactor.

It localises to the cytoplasm. The enzyme catalyses (S)-4-amino-5-oxopentanoate = 5-aminolevulinate. Its pathway is porphyrin-containing compound metabolism; protoporphyrin-IX biosynthesis; 5-aminolevulinate from L-glutamyl-tRNA(Glu): step 2/2. The chain is Glutamate-1-semialdehyde 2,1-aminomutase from Hydrogenobaculum sp. (strain Y04AAS1).